The primary structure comprises 599 residues: Elongation factor 4 (599 aa).

The tr-type G domain maps to 4–186; that stretch reads KFIRNFSIIA…AIIKHVPPPL (183 aa). Residues 16–21 and 133–136 each bind GTP; these read DHGKST and NKID.

This sequence belongs to the TRAFAC class translation factor GTPase superfamily. Classic translation factor GTPase family. LepA subfamily.

It is found in the cell membrane. The catalysed reaction is GTP + H2O = GDP + phosphate + H(+). Its function is as follows. Required for accurate and efficient protein synthesis under certain stress conditions. May act as a fidelity factor of the translation reaction, by catalyzing a one-codon backward translocation of tRNAs on improperly translocated ribosomes. Back-translocation proceeds from a post-translocation (POST) complex to a pre-translocation (PRE) complex, thus giving elongation factor G a second chance to translocate the tRNAs correctly. Binds to ribosomes in a GTP-dependent manner. The chain is Elongation factor 4 from Ureaplasma urealyticum serovar 10 (strain ATCC 33699 / Western).